Reading from the N-terminus, the 296-residue chain is 4-hydroxy-tetrahydrodipicolinate synthase (296 aa).

Residue threonine 45 participates in pyruvate binding. The active-site Proton donor/acceptor is tyrosine 133. The active-site Schiff-base intermediate with substrate is lysine 161. Isoleucine 203 provides a ligand contact to pyruvate.

This sequence belongs to the DapA family. Homotetramer; dimer of dimers.

It is found in the cytoplasm. The catalysed reaction is L-aspartate 4-semialdehyde + pyruvate = (2S,4S)-4-hydroxy-2,3,4,5-tetrahydrodipicolinate + H2O + H(+). The protein operates within amino-acid biosynthesis; L-lysine biosynthesis via DAP pathway; (S)-tetrahydrodipicolinate from L-aspartate: step 3/4. Functionally, catalyzes the condensation of (S)-aspartate-beta-semialdehyde [(S)-ASA] and pyruvate to 4-hydroxy-tetrahydrodipicolinate (HTPA). This is 4-hydroxy-tetrahydrodipicolinate synthase from Idiomarina loihiensis (strain ATCC BAA-735 / DSM 15497 / L2-TR).